Reading from the N-terminus, the 286-residue chain is UDP-3-O-acyl-N-acetylglucosamine deacetylase (286 aa).

Positions 79, 237, and 241 each coordinate Zn(2+). The active-site Proton donor is the histidine 264.

It belongs to the LpxC family. Zn(2+) is required as a cofactor.

The catalysed reaction is a UDP-3-O-[(3R)-3-hydroxyacyl]-N-acetyl-alpha-D-glucosamine + H2O = a UDP-3-O-[(3R)-3-hydroxyacyl]-alpha-D-glucosamine + acetate. The protein operates within glycolipid biosynthesis; lipid IV(A) biosynthesis; lipid IV(A) from (3R)-3-hydroxytetradecanoyl-[acyl-carrier-protein] and UDP-N-acetyl-alpha-D-glucosamine: step 2/6. Catalyzes the hydrolysis of UDP-3-O-myristoyl-N-acetylglucosamine to form UDP-3-O-myristoylglucosamine and acetate, the committed step in lipid A biosynthesis. This is UDP-3-O-acyl-N-acetylglucosamine deacetylase from Brucella melitensis biotype 2 (strain ATCC 23457).